The chain runs to 506 residues: RNA-splicing ligase RtcB homolog (506 aa).

Residues aspartate 120, cysteine 123, histidine 228, histidine 260, and histidine 354 each contribute to the Mn(2+) site. 227-231 is a GMP binding site; the sequence is NHYAE. GMP-binding positions include 354–355, 403–406, serine 410, 429–432, and lysine 505; these read HN, GGSM, and HGAG. Histidine 429 acts as the GMP-histidine intermediate in catalysis.

It belongs to the RtcB family. As to quaternary structure, catalytic component of the tRNA-splicing ligase complex. Requires Mn(2+) as cofactor.

The enzyme catalyses a 3'-end 3'-phospho-ribonucleotide-RNA + a 5'-end dephospho-ribonucleoside-RNA + GTP = a ribonucleotidyl-ribonucleotide-RNA + GMP + diphosphate. It catalyses the reaction a 3'-end 2',3'-cyclophospho-ribonucleotide-RNA + a 5'-end dephospho-ribonucleoside-RNA + GTP + H2O = a ribonucleotidyl-ribonucleotide-RNA + GMP + diphosphate + H(+). Catalytic subunit of the tRNA-splicing ligase complex that acts by directly joining spliced tRNA halves to mature-sized tRNAs by incorporating the precursor-derived splice junction phosphate into the mature tRNA as a canonical 3',5'-phosphodiester. May act as an RNA ligase with broad substrate specificity, and may function toward other RNAs. The sequence is that of RNA-splicing ligase RtcB homolog from Aedes aegypti (Yellowfever mosquito).